We begin with the raw amino-acid sequence, 475 residues long: Sulfate adenylyltransferase subunit 1 (475 aa).

The tr-type G domain maps to 25–241 (KSLLRFLTCG…LENIEIQRVV (217 aa)). The G1 stretch occupies residues 34-41 (GSVDDGKS). Residue 34-41 (GSVDDGKS) participates in GTP binding. Residues 92-96 (GITID) form a G2 region. The tract at residues 113-116 (DTPG) is G3. Residues 113–117 (DTPGH) and 168–171 (NKMD) each bind GTP. The interval 168 to 171 (NKMD) is G4. Residues 206-208 (SAL) form a G5 region.

It belongs to the TRAFAC class translation factor GTPase superfamily. Classic translation factor GTPase family. CysN/NodQ subfamily. In terms of assembly, heterodimer composed of CysD, the smaller subunit, and CysN.

The catalysed reaction is sulfate + ATP + H(+) = adenosine 5'-phosphosulfate + diphosphate. It functions in the pathway sulfur metabolism; hydrogen sulfide biosynthesis; sulfite from sulfate: step 1/3. In terms of biological role, with CysD forms the ATP sulfurylase (ATPS) that catalyzes the adenylation of sulfate producing adenosine 5'-phosphosulfate (APS) and diphosphate, the first enzymatic step in sulfur assimilation pathway. APS synthesis involves the formation of a high-energy phosphoric-sulfuric acid anhydride bond driven by GTP hydrolysis by CysN coupled to ATP hydrolysis by CysD. This chain is Sulfate adenylyltransferase subunit 1, found in Cronobacter sakazakii (strain ATCC BAA-894) (Enterobacter sakazakii).